The following is a 61-amino-acid chain: Outer membrane lipoprotein YnbE (61 aa).

The N-terminal stretch at 1–16 (MKILLAALTSSFMLVG) is a signal peptide. The N-palmitoyl cysteine moiety is linked to residue C17. C17 carries the S-diacylglycerol cysteine lipid modification.

The protein belongs to the lipoprotein YnbE family. In terms of assembly, interacts with the C-terminal region of the probable phospholipid transport protein YdbH.

It localises to the cell outer membrane. Functionally, involved in outer membrane lipid homeostasis. Interacts with the inner membrane protein YdbH to form a functional protein bridge connecting the inner and outer membranes of the cell. Is required for YdbH's function and may facilitate phospholipid transport through the periplasm. The polypeptide is Outer membrane lipoprotein YnbE (ynbE) (Escherichia coli O6:H1 (strain CFT073 / ATCC 700928 / UPEC)).